A 246-amino-acid polypeptide reads, in one-letter code: Apolipoprotein L domain-containing protein 1 (246 aa).

2 helical membrane-spanning segments follow: residues 50-72 (SLAA…IVGL) and 89-109 (GLGV…SLIF). Positions 193-220 (LKAKIQKLSESLESCTGALDELSEQLES) form a coiled coil.

This sequence belongs to the apolipoprotein L family. Present at low levels in brain vascular cells (at protein level).

It is found in the cell membrane. It localises to the cell junction. Its subcellular location is the cytoplasmic vesicle. The protein localises to the secretory vesicle. Its function is as follows. Is a modulator of endothelial barrier permeability, required for proper organization of endothelial cell-cell junctions and cytoskeleton. It also plays a role in the modulation of secretory autophagy. May affect blood-brain barrier permeability. This is Apolipoprotein L domain-containing protein 1 (Apold1) from Rattus norvegicus (Rat).